A 331-amino-acid polypeptide reads, in one-letter code: Vitamin B12 import system permease protein BtuC (331 aa).

9 helical membrane-spanning segments follow: residues 20 to 42 (IMSV…FLSP), 62 to 84 (LVAA…VLLG), 91 to 113 (GVLG…LPVL), 118 to 140 (IFML…IARA), 147 to 169 (RLLL…AFYF), 189 to 208 (ASWY…VWLC), 240 to 262 (LAIS…VGLV), 277 to 299 (YLLP…GARL), and 306 to 325 (LPLG…WMLV).

Belongs to the binding-protein-dependent transport system permease family. FecCD subfamily. In terms of assembly, the complex is composed of two ATP-binding proteins (BtuD), two transmembrane proteins (BtuC) and a solute-binding protein (BtuF).

It localises to the cell inner membrane. Part of the ABC transporter complex BtuCDF involved in vitamin B12 import. Involved in the translocation of the substrate across the membrane. This Vibrio parahaemolyticus serotype O3:K6 (strain RIMD 2210633) protein is Vitamin B12 import system permease protein BtuC.